The chain runs to 576 residues: Type II restriction enzyme BsuRI (576 aa).

Monomer. Requires Mg(2+) as cofactor.

The catalysed reaction is Endonucleolytic cleavage of DNA to give specific double-stranded fragments with terminal 5'-phosphates.. In terms of biological role, a P subtype restriction enzyme that recognizes the double-stranded sequence 5'-GGCC-3' and cleaves after G-2. The polypeptide is Type II restriction enzyme BsuRI (hsdRR) (Bacillus subtilis).